The chain runs to 423 residues: Transmembrane protease serine 11E (423 aa).

Topologically, residues 1-18 (MYRSCVVRARKRTCVEPW) are cytoplasmic. A helical; Signal-anchor for type II membrane protein membrane pass occupies residues 19–39 (VIGIISFLSLIVLAVCIGLTV). The Extracellular segment spans residues 40 to 423 (HYVRYNHRRT…RHWIASNTGI (384 aa)). Positions 48 to 166 (RTYNYYSTLS…ESVKIKKINK (119 aa)) constitute an SEA domain. N-linked (GlcNAc...) asparagine glycans are attached at residues Asn74, Asn165, Asn182, and Asn223. 4 disulfides stabilise this stretch: Cys176/Cys297, Cys217/Cys233, Cys342/Cys358, and Cys369/Cys398. The Peptidase S1 domain maps to 192–422 (IVGGTPVEEE…FRHWIASNTG (231 aa)). Residues His232 and Asp277 each act as charge relay system in the active site. The active-site Charge relay system is the Ser373.

The protein belongs to the peptidase S1 family. In terms of assembly, forms a heterodimer with SERPINA5 and SERPINE1. N-glycosylated. In terms of tissue distribution, expressed in epidermal, oral and male reproductive tissues.

The protein localises to the cell membrane. The protein resides in the secreted. Inhibited by SERPINA5. Serine protease which possesses both gelatinolytic and caseinolytic activities. Shows a preference for Arg in the P1 position. This Mus musculus (Mouse) protein is Transmembrane protease serine 11E (Tmprss11e).